Here is a 500-residue protein sequence, read N- to C-terminus: E3 ubiquitin-protein ligase TRIM69 (500 aa).

The tract at residues 1–22 (MEVSSRPPSNFDPGNYVEMSDP) is disordered. The necessary for nuclear localization stretch occupies residues 1-153 (MEVSSRPPSN…SMGQSKDFLQ (153 aa)). An RING-type zinc finger spans residues 42-83 (CPLCNDWFRDPLMLTCGHNFCQDCIQSFWKVHSKETFCPDCK). Residues 217–256 (NKEKDILNDLRDEGKLLNEEMEVNLNQIQEQCLVAKDMLA) are a coiled coil. The B30.2/SPRY domain occupies 306 to 500 (PIQYIIWKEM…KEPLHIVHPQ (195 aa)). A Phosphoserine modification is found at S342.

The protein belongs to the TRIM/RBCC family. In terms of assembly, homo-multimer; required for antiviral activity. Interacts with PML. Phosphorylated. Phosphorylation is necessary for nuclear localization. In terms of tissue distribution, expressed in spermatid.

The protein resides in the cytoplasm. The protein localises to the nucleus. It is found in the nucleus speckle. It localises to the cytoskeleton. Its subcellular location is the microtubule organizing center. The protein resides in the centrosome. The catalysed reaction is S-ubiquitinyl-[E2 ubiquitin-conjugating enzyme]-L-cysteine + [acceptor protein]-L-lysine = [E2 ubiquitin-conjugating enzyme]-L-cysteine + N(6)-ubiquitinyl-[acceptor protein]-L-lysine.. It functions in the pathway protein modification; protein ubiquitination. E3 ubiquitin ligase that plays an important role in antiviral immunity by restricting different viral infections including dengue virus or vesicular stomatitis indiana virus. Ubiquitinates viral proteins such as dengue virus NS3 thereby limiting infection. In addition, acts as a key mediator of type I interferon induced microtubule stabilization by directly associating to microtubules independently of its E3 ligase activity. Also plays a role in cataract formation together with TP53. Mechanistically, inhibits UVB-induced cell apoptosis and reactive oxygen species (ROS) production by inducing TP53 ubiquitination. Regulates centrosome dynamics and mitotic progression by ubiquitinating STK3/MST2; leading to its redistribution to the perinuclear cytoskeleton and subsequent phosphorylation by PLK1. This is E3 ubiquitin-protein ligase TRIM69 (Trim69) from Mus musculus (Mouse).